Reading from the N-terminus, the 666-residue chain is MLPEASSLWLLRLLRDVQLAQFYRPILEELNVTRPEHFDFVRPEDLDNIGMGRPAQRRLNEALKRYRSGVKSKNWVYKILGGFAPEQKEIPPRSDSPLCFHEPEGGLKCLIPEGAVRRGELLGSGCFGVVHRGLWTLPSGQSIPVAVKSLRVGPEGPMGTELGDFLREVSVMMKLEHPHVLRLHGLVLGQPLQMVMELAPLGSLHARLTAPAPTPPLPVALLCLFLRQLAGAMAYLGSCGLVHRDLATRNLLLASPRMIKVADFGLVRPLGGARGRYVMGGPRPIPYAWCAPESLRQGAFSSASDVWMFGVTLWEMFSGGEEPWAGVPPYLILQRLEKDRARLPKPPLCSRALYSLALRCWAPHPADRPSFSNLEGLLQEAWLSEGRCVREVTEPGALRMEPGDPITIIEGSLDTATWKGQNGRTLKVGNFPASAVTLADLGGSPVTHPAHRGSPAHGEKCRGGTDGDREKATLQDLPPARSHRTKMPLQRMRGISKSLESVLSLGPRPTGGGSSPPELRRTRAMPQRLPDLPPRPPDLPPRPPIICNSSQPTQPHKARPKRESSHNHRTGAPGASKATVPSGGPLSDPEWQRKVVEVELSVHGVTYQECQVALRTTGGDVASAIRNLKVDQLFHLSNRSRADCRRILEHHQWDLSAASRYILARS.

Residue Ser96 is modified to Phosphoserine. In terms of domain architecture, Protein kinase spans Val116–Leu383. ATP-binding positions include Leu122–Val130 and Lys148. The active-site Proton acceptor is Asp245. Phosphoserine is present on Ser255. Residues Ala381 to Leu441 form the SH3 domain. Residues Gly442–Pro589 are disordered. Over residues His457 to Thr473 the composition is skewed to basic and acidic residues. Ser498 is modified (phosphoserine). A Phosphothreonine modification is found at Thr510. A Phosphoserine modification is found at Ser515. The segment covering Asp531 to Pro544 has biased composition (pro residues). Residue Ser582 is modified to Phosphoserine.

This sequence belongs to the protein kinase superfamily. Tyr protein kinase family. Interacts with the SH3 domain of PLCG1 via its Pro-rich domain. Post-translationally, autophosphorylated on tyrosine residues. Expressed in whole embryo and all adult tissues examined including liver, kidney, heart, brain, skeletal muscle and intestine. Also detected in various myeloid- and lymphoid-derived cell lines.

The protein resides in the membrane. It is found in the cytoplasm. It catalyses the reaction L-tyrosyl-[protein] + ATP = O-phospho-L-tyrosyl-[protein] + ADP + H(+). Functionally, may function in signaling pathways utilized broadly during fetal development and more selectively in adult tissues and in cells of the lymphohematopoietic system. Could specifically be involved in phospholipid signal transduction. Involved in negative regulation of cell growth. Has tumor suppressor properties. Plays a negative regulatory role in the Ras-MAPK pathway. This chain is Non-receptor tyrosine-protein kinase TNK1, found in Mus musculus (Mouse).